The following is a 513-amino-acid chain: Trigger factor (513 aa).

The 86-residue stretch at 164-249 (GDQIIIDFLG…VKAVKNAGEF (86 aa)) folds into the PPIase FKBP-type domain. The tract at residues 436 to 513 (QAAIEAEEGA…KAPAKKKAEG (78 aa)) is disordered. Over residues 452–461 (AKKAPAKKKA) the composition is skewed to basic residues. A compositionally biased stretch (low complexity) spans 489–498 (ADEAPAAEEA). Residues 501–513 (AKKKAPAKKKAEG) show a composition bias toward basic residues.

Belongs to the FKBP-type PPIase family. Tig subfamily.

Its subcellular location is the cytoplasm. It catalyses the reaction [protein]-peptidylproline (omega=180) = [protein]-peptidylproline (omega=0). Functionally, involved in protein export. Acts as a chaperone by maintaining the newly synthesized protein in an open conformation. Functions as a peptidyl-prolyl cis-trans isomerase. The polypeptide is Trigger factor (Novosphingobium aromaticivorans (strain ATCC 700278 / DSM 12444 / CCUG 56034 / CIP 105152 / NBRC 16084 / F199)).